An 85-amino-acid polypeptide reads, in one-letter code: Putative sodium channel toxin Ts37 (85 aa).

Residues 1–20 (MAGEWACLLVSLVLLWGAAG) form the signal peptide. The LCN-type CS-alpha/beta domain maps to 22–83 (RDGFLLDRNF…KIWGDSVRCR (62 aa)). 4 disulfide bridges follow: cysteine 32–cysteine 82, cysteine 36–cysteine 59, cysteine 45–cysteine 64, and cysteine 49–cysteine 66.

This sequence belongs to the long (4 C-C) scorpion toxin superfamily. Sodium channel inhibitor family. As to expression, expressed by the venom gland.

The protein resides in the secreted. Its function is as follows. Putative sodium channel toxin. This Tityus serrulatus (Brazilian scorpion) protein is Putative sodium channel toxin Ts37.